The chain runs to 323 residues: Aldo-keto reductase family 1 member C4 (323 aa).

Residues 20–24 (GFGSY) and Asp-50 each bind NADP(+). Tyr-55 serves as the catalytic Proton donor. Substrate is bound at residue His-117. NADP(+)-binding positions include 166–167 (SN), Gln-190, 216–221 (HSALGT), and 270–280 (KSYNEQRIREN).

The protein belongs to the aldo/keto reductase family. In terms of assembly, monomer. High expression in liver. Also expressed in kidney.

The protein localises to the cytoplasm. It is found in the cytosol. The enzyme catalyses chlordecone alcohol + NADP(+) = chlordecone + NADPH + H(+). It carries out the reaction a 3alpha-hydroxysteroid + NADP(+) = a 3-oxosteroid + NADPH + H(+). It catalyses the reaction a 3alpha-hydroxysteroid + NAD(+) = a 3-oxosteroid + NADH + H(+). The catalysed reaction is 5alpha-androstane-3alpha,17beta-diol + NADP(+) = 17beta-hydroxy-5alpha-androstan-3-one + NADPH + H(+). The enzyme catalyses 5alpha-androstane-3beta,17beta-diol + NADP(+) = 17beta-hydroxy-5alpha-androstan-3-one + NADPH + H(+). It carries out the reaction 5alpha-androstane-3alpha,17beta-diol + NAD(+) = 17beta-hydroxy-5alpha-androstan-3-one + NADH + H(+). It catalyses the reaction 17beta-estradiol + NADP(+) = estrone + NADPH + H(+). The catalysed reaction is 17beta-estradiol + NAD(+) = estrone + NADH + H(+). The enzyme catalyses (20S)-hydroxypregn-4-en-3-one + NADP(+) = progesterone + NADPH + H(+). It carries out the reaction (20S)-hydroxypregn-4-en-3-one + NAD(+) = progesterone + NADH + H(+). It catalyses the reaction androsterone + NADP(+) = 5alpha-androstan-3,17-dione + NADPH + H(+). The catalysed reaction is testosterone + NADP(+) = androst-4-ene-3,17-dione + NADPH + H(+). The enzyme catalyses testosterone + NAD(+) = androst-4-ene-3,17-dione + NADH + H(+). It carries out the reaction 3alpha-hydroxy-5alpha-androstane 17-O-(beta-D-glucuronate) + NADP(+) = 5alpha-dihydrotestosterone 17-O-(beta-D-glucuronate) + NADPH + H(+). It catalyses the reaction (3beta,5alpha,17beta)-3-hydroxy-androstan-17-yl sulfate + NADP(+) = 5alpha-dihydrotestosterone sulfate + NADPH + H(+). The catalysed reaction is 5alpha-androstane-3alpha,17beta-diol + NAD(+) = androsterone + NADH + H(+). It participates in steroid metabolism. Potently inhibited by benzbromarone, 3',3'',5',5''-tetrabromophenolphthalein (TBPP) and o-cresolphthalein. Its function is as follows. Cytosolic aldo-keto reductase that catalyzes the NADH and NADPH-dependent reduction of ketosteroids to hydroxysteroids. Liver specific enzyme that acts as an NAD(P)(H)-dependent 3-, 17- and 20-ketosteroid reductase on the steroid nucleus and side chain. Displays the ability to catalyze both oxidation and reduction in vitro, but most probably acts as a reductase in vivo since the oxidase activity measured in vitro is inhibited by physiological concentration of NADPH. Acts preferentially as a 3-alpha-hydroxysteroid dehydrogenase (HSD) with a subsidiary 3-beta-HSD activity. Catalyzes efficiently the transformation of the potent androgen 5-alpha-dihydrotestosterone (5alpha-DHT or 17beta-hydroxy-5alpha-androstan-3-one) into the less active form, 5-alpha-androstan-3-alpha,17-beta-diol (3-alpha-diol). Catalyzes the reduction of estrone into 17beta-estradiol but with low efficiency. Metabolizes a broad spectrum of natural and synthetic therapeutic steroid and plays an important role in metabolism of androgens, estrogens, progestereone and conjugated steroids. Catalyzes the biotransformation of the pesticide chlordecone (kepone) to its corresponding alcohol leading to increased biliary excretion of the pesticide and concomitant reduction of its neurotoxicity since bile is the major excretory route. The sequence is that of Aldo-keto reductase family 1 member C4 (AKR1C4) from Macaca fuscata fuscata (Japanese macaque).